Reading from the N-terminus, the 135-residue chain is Large ribosomal subunit protein mL41 (135 aa).

The N-terminal 13 residues, 1-13 (MGFLTAVTQGLVR), are a transit peptide targeting the mitochondrion.

This sequence belongs to the mitochondrion-specific ribosomal protein mL41 family. As to quaternary structure, component of the mitochondrial ribosome large subunit (39S) which comprises a 16S rRNA and about 50 distinct proteins. Interacts with BCL2.

It localises to the mitochondrion. Component of the mitochondrial ribosome large subunit. Also involved in apoptosis and cell cycle. Enhances p53/TP53 stability, thereby contributing to p53/TP53-induced apoptosis in response to growth-inhibitory condition. Enhances p53/TP53 translocation to the mitochondria. Has the ability to arrest the cell cycle at the G1 phase, possibly by stabilizing the CDKN1A and CDKN1B (p27Kip1) proteins. In Mus musculus (Mouse), this protein is Large ribosomal subunit protein mL41 (Mrpl41).